Consider the following 284-residue polypeptide: RNase adapter protein RapZ (284 aa).

8–15 (GRSGSGKS) lines the ATP pocket. 56-59 (DVRN) contributes to the GTP binding site. The interval 266–284 (RSRGKNVQSRHRTLEKRKS) is RNA-binding.

The protein belongs to the RapZ-like family. RapZ subfamily. As to quaternary structure, homotrimer.

In terms of biological role, modulates the synthesis of GlmS, by affecting the processing and stability of the regulatory small RNA GlmZ. When glucosamine-6-phosphate (GlcN6P) concentrations are high in the cell, RapZ binds GlmZ and targets it to cleavage by RNase E. Consequently, GlmZ is inactivated and unable to activate GlmS synthesis. Under low GlcN6P concentrations, RapZ is sequestered and inactivated by an other regulatory small RNA, GlmY, preventing GlmZ degradation and leading to synthesis of GlmS. In Klebsiella oxytoca, this protein is RNase adapter protein RapZ.